Here is a 193-residue protein sequence, read N- to C-terminus: Holliday junction branch migration complex subunit RuvA (193 aa).

Residues 1-64 (MIGRIAGTLL…EDAHLLYGFL (64 aa)) form a domain I region. The segment at 65-139 (TPPERSTFRE…GKLGADLGPL (75 aa)) is domain II. The interval 139-143 (LAGAA) is flexible linker. The domain III stretch occupies residues 144 to 193 (SPSDHATDILNALVALGYSEKEALAAIKNVPAGTGVSEGIKLSLKALSKA).

This sequence belongs to the RuvA family. In terms of assembly, homotetramer. Forms an RuvA(8)-RuvB(12)-Holliday junction (HJ) complex. HJ DNA is sandwiched between 2 RuvA tetramers; dsDNA enters through RuvA and exits via RuvB. An RuvB hexamer assembles on each DNA strand where it exits the tetramer. Each RuvB hexamer is contacted by two RuvA subunits (via domain III) on 2 adjacent RuvB subunits; this complex drives branch migration. In the full resolvosome a probable DNA-RuvA(4)-RuvB(12)-RuvC(2) complex forms which resolves the HJ.

The protein resides in the cytoplasm. In terms of biological role, the RuvA-RuvB-RuvC complex processes Holliday junction (HJ) DNA during genetic recombination and DNA repair, while the RuvA-RuvB complex plays an important role in the rescue of blocked DNA replication forks via replication fork reversal (RFR). RuvA specifically binds to HJ cruciform DNA, conferring on it an open structure. The RuvB hexamer acts as an ATP-dependent pump, pulling dsDNA into and through the RuvAB complex. HJ branch migration allows RuvC to scan DNA until it finds its consensus sequence, where it cleaves and resolves the cruciform DNA. The sequence is that of Holliday junction branch migration complex subunit RuvA from Burkholderia mallei (strain NCTC 10229).